Here is a 311-residue protein sequence, read N- to C-terminus: Methionyl-tRNA formyltransferase (311 aa).

117 to 120 provides a ligand contact to (6S)-5,6,7,8-tetrahydrofolate; the sequence is SLLP.

It belongs to the Fmt family.

The catalysed reaction is L-methionyl-tRNA(fMet) + (6R)-10-formyltetrahydrofolate = N-formyl-L-methionyl-tRNA(fMet) + (6S)-5,6,7,8-tetrahydrofolate + H(+). In terms of biological role, attaches a formyl group to the free amino group of methionyl-tRNA(fMet). The formyl group appears to play a dual role in the initiator identity of N-formylmethionyl-tRNA by promoting its recognition by IF2 and preventing the misappropriation of this tRNA by the elongation apparatus. The polypeptide is Methionyl-tRNA formyltransferase (Bordetella avium (strain 197N)).